A 711-amino-acid chain; its full sequence is Methionine--tRNA ligase (711 aa).

A 'HIGH' region motif is present at residues 15–25 (PYTNGPIHIGH). Residues C147, C150, C160, and C163 each contribute to the Zn(2+) site. The 'KMSKS' region motif lies at 336 to 340 (KLSTS). Residue T339 coordinates ATP. The region spanning 610-711 (DFAKMDIRIG…ADAPNGATVN (102 aa)) is the tRNA-binding domain.

Belongs to the class-I aminoacyl-tRNA synthetase family. MetG type 1 subfamily. In terms of assembly, homodimer. Zn(2+) serves as cofactor.

The protein localises to the cytoplasm. The enzyme catalyses tRNA(Met) + L-methionine + ATP = L-methionyl-tRNA(Met) + AMP + diphosphate. In terms of biological role, is required not only for elongation of protein synthesis but also for the initiation of all mRNA translation through initiator tRNA(fMet) aminoacylation. In Flavobacterium johnsoniae (strain ATCC 17061 / DSM 2064 / JCM 8514 / BCRC 14874 / CCUG 350202 / NBRC 14942 / NCIMB 11054 / UW101) (Cytophaga johnsonae), this protein is Methionine--tRNA ligase.